A 507-amino-acid polypeptide reads, in one-letter code: uncharacterized protein (507 aa).

A run of 12 helical transmembrane segments spans residues 46–66, 83–103, 112–132, 141–161, 181–201, 207–227, 263–283, 299–319, 328–348, 354–374, 389–409, and 442–462; these read WIVL…WIGY, AWLS…AMWA, AVLI…ISSL, FPIC…IMFL, IGVM…PAIV, VIWL…IATF, IILL…YTVM, VCAA…SIFV, TLKI…QLTL, VILG…YPIG, TSTG…VFIM, and MSIM…VVLF. The span at 477–493 shows a compositional bias: basic and acidic residues; the sequence is ATADKAKELSNQNKDRI. The interval 477-507 is disordered; that stretch reads ATADKAKELSNQNKDRITLQAESAVEPLQKK.

It is found in the membrane. This is an uncharacterized protein from Caenorhabditis elegans.